Reading from the N-terminus, the 182-residue chain is Adenine phosphoribosyltransferase (182 aa).

This sequence belongs to the purine/pyrimidine phosphoribosyltransferase family. As to quaternary structure, homodimer.

The protein resides in the cytoplasm. The enzyme catalyses AMP + diphosphate = 5-phospho-alpha-D-ribose 1-diphosphate + adenine. It functions in the pathway purine metabolism; AMP biosynthesis via salvage pathway; AMP from adenine: step 1/1. In terms of biological role, catalyzes a salvage reaction resulting in the formation of AMP, that is energically less costly than de novo synthesis. In Koribacter versatilis (strain Ellin345), this protein is Adenine phosphoribosyltransferase.